Consider the following 276-residue polypeptide: Proteasome chaperone 1 (276 aa).

This sequence belongs to the PSMG1 family. In terms of assembly, component of the 20S proteasome chaperone. Forms a heterodimer with ADD66 that binds to proteasome precursors.

Its subcellular location is the cytoplasm. Its function is as follows. Involved in 20S proteasome assembly. In Saccharomyces cerevisiae (strain ATCC 204508 / S288c) (Baker's yeast), this protein is Proteasome chaperone 1 (PBA1).